The chain runs to 1225 residues: Catenin delta-2 (1225 aa).

4 disordered regions span residues 1–51 (MFAR…TSAI), 87–117 (SETGSMSSMSSAEEQFQWQSQDGQKDIEDEL), 134–242 (SGIL…HLPD), and 256–312 (SSTL…KSYS). Composition is skewed to polar residues over residues 20-51 (QPSSASEKTSSLSPGLNTSNGDGSETETTSAI) and 98-108 (AEEQFQWQSQD). Positions 49 to 84 (SAILASVKEQELQFERLTRELEAERQIVASQLERCK) form a coiled coil. Residues 149-160 (SLLSQSALQLNS) are compositionally biased toward low complexity. 2 stretches are compositionally biased toward polar residues: residues 172–187 (YHSNQTLALGETTPSQ) and 195–209 (ARATGQSFSQGTTSR). The residue at position 209 (Arg-209) is an Omega-N-methylarginine. The segment covering 217–229 (EPAPPPPPPPREP) has biased composition (pro residues). An Omega-N-methylarginine modification is found at Arg-264. Ser-267 and Ser-276 each carry phosphoserine. Arg-282 and Arg-296 each carry omega-N-methylarginine. A compositionally biased stretch (polar residues) spans 299-312 (SPKQSPSRLAKSYS). Phosphoserine is present on residues Ser-327, Ser-360, Ser-415, and Ser-461. One copy of the ARM 1 repeat lies at 394-438 (GSRASYSSQHGHLGPELRALQSPEHHIDPIYEDRVYQKPPMRSLS). Disordered stretches follow at residues 432–483 (PPMR…NAAA) and 514–542 (SPYSKSGPALPPEGTLARSPSIDSIQKDP). The span at 469 to 478 (LQRTGSQHGP) shows a compositional bias: polar residues. At Ser-514 the chain carries Phosphoserine. The residue at position 516 (Tyr-516) is a Phosphotyrosine. ARM repeat units lie at residues 540-579 (KDPREFGWRDPELPEVIQMLQHQFPSVQSNAAAYLQHLCF), 582-621 (NKIKAEIRRQGGIQLLVDLLDHRMTEVHRSACGALRNLVY), 626-666 (DDNK…NLSS), 682-724 (LTNA…NVSS), 728-773 (EARR…NLSY), 835-875 (PKGI…NLAA), 882-921 (VYIRAAVRKEKGLPILVELLRIDNDRVVCAVATALRNMAL), and 975-1018 (MENA…SMWQ). The segment at 1042–1077 (TIERDRQRPYSSSRTPSISPVRVSPNNRSASAPASP) is disordered. Positions 1050–1059 (PYSSSRTPSI) are enriched in polar residues. Phosphoserine occurs at positions 1065 and 1076. The segment covering 1065 to 1077 (SPNNRSASAPASP) has biased composition (low complexity).

Belongs to the beta-catenin family. In terms of assembly, binds to E-cadherin at a juxtamembrane site within the cytoplasmic domain. Interacts with PDZD2. Interacts with ZBTB33. Binds to PSEN1. Interacts with ARHGEF28. Interacts (via the extreme C-terminus) with FRMPD2 (via the PDZ 2 domain). Interacts with CDK5. Interacts with CTNNB1. Interacts with GSK3A and GSK3B. Interacts with DNM2. Interacts with CCDC85B. O-glycosylated. Post-translationally, phosphorylated by CDK5. Phosphorylated by GSK3B. As to expression, expressed in brain; highest expression is observed in fetal brain.

It localises to the nucleus. The protein resides in the cell junction. It is found in the adherens junction. Its subcellular location is the cell projection. The protein localises to the dendrite. It localises to the perikaryon. Functionally, has a critical role in neuronal development, particularly in the formation and/or maintenance of dendritic spines and synapses. Involved in the regulation of Wnt signaling. It probably acts on beta-catenin turnover, facilitating beta-catenin interaction with GSK3B, phosphorylation, ubiquitination and degradation. Functions as a transcriptional activator when bound to ZBTB33. May be involved in neuronal cell adhesion and tissue morphogenesis and integrity by regulating adhesion molecules. The chain is Catenin delta-2 (CTNND2) from Homo sapiens (Human).